A 112-amino-acid polypeptide reads, in one-letter code: Conotoxin vil14.5 (112 aa).

Positions 1–22 (MGFRVLVLVVMATTSALPFTFS) are cleaved as a signal peptide. Positions 23–85 (EEPGRSPFRP…FAELSVGQRR (63 aa)) are excised as a propeptide. The interval 53-74 (RADGQPPDMRQPEMRRPEVRQP) is disordered. Basic and acidic residues predominate over residues 62 to 74 (RQPEMRRPEVRQP). Intrachain disulfides connect Cys91–Cys111 and Cys95–Cys107.

This sequence belongs to the conotoxin R superfamily. Expressed by the venom duct.

It localises to the secreted. This Conus villepinii (Villepin's cone) protein is Conotoxin vil14.5.